A 347-amino-acid chain; its full sequence is MAAIELIDLKKNYGPVPAVKGINLTVADGEMIVLVGPSGCGKSTLLRMIAGLEVISSGHLRISGNDVGHVDPADRNIAMVFQNYALYPHMTVRQNLEYGLKNRRVPRHEINRRIADAADILEIGEFLERRPRQLSGGQRQRVAMGRAIVRDPAAFLFDEPLSNLDAKLRVRMRVEIRRLQRQLKTTSLYVTHDQLEAMTLADRLVVMNGGRIEQIGTPVEVYRRPETVFVAGFIGSPPMNLIDLDELGPSDRAFPRDTDLVGIRPGAINLGAGSAHDLRFDAHVELIETVGDENNVHLRIDDSRKRIIASVPTDRHLRESDRISCHVRMEALHPFNKSTGRRTDRSR.

The ABC transporter domain occupies 4–234 (IELIDLKKNY…PETVFVAGFI (231 aa)). 36-43 (GPSGCGKS) provides a ligand contact to ATP.

It belongs to the ABC transporter superfamily. sn-glycerol-3-phosphate importer (TC 3.A.1.1.3) family. In terms of assembly, the complex is composed of two ATP-binding proteins (UgpC), two transmembrane proteins (UgpA and UgpE) and a solute-binding protein (UgpB).

It is found in the cell inner membrane. It catalyses the reaction sn-glycerol 3-phosphate(out) + ATP + H2O = sn-glycerol 3-phosphate(in) + ADP + phosphate + H(+). Part of the ABC transporter complex UgpBAEC involved in sn-glycerol-3-phosphate (G3P) import. Responsible for energy coupling to the transport system. This is sn-glycerol-3-phosphate import ATP-binding protein UgpC 1 from Rhizobium etli (strain ATCC 51251 / DSM 11541 / JCM 21823 / NBRC 15573 / CFN 42).